The following is a 185-amino-acid chain: Elongation factor P (185 aa).

It belongs to the elongation factor P family.

It is found in the cytoplasm. It participates in protein biosynthesis; polypeptide chain elongation. Functionally, involved in peptide bond synthesis. Stimulates efficient translation and peptide-bond synthesis on native or reconstituted 70S ribosomes in vitro. Probably functions indirectly by altering the affinity of the ribosome for aminoacyl-tRNA, thus increasing their reactivity as acceptors for peptidyl transferase. The protein is Elongation factor P of Thermoanaerobacter sp. (strain X514).